The primary structure comprises 240 residues: MPLASLEVGQHLYWQIGGLKVHGQVLITSWIVIGILVIVSVLATRKVERIPSGLQNFMEYALEFVRDLTKNQIGEKEYRPWVPFIGTLFLFIFVSNWSGALFPWKLISLPEGELAAPTNDINTTVALALCTSFVYFYAGFRKKGLGYFRKYIEPTPVLLPIAILEDFTKPLSLSFRLFGNILADELVVAVLVLLVPLIVPLPVMLLGLFTSGIQALVFATLAGAYIHESLEGHGEEEEAH.

Helical transmembrane passes span 23–43 (GQVL…SVLA), 82–102 (VPFI…GALF), 120–140 (DINT…YAGF), 186–206 (LVVA…VMLL), and 207–227 (GLFT…AYIH).

The protein belongs to the ATPase A chain family. F-type ATPases have 2 components, CF(1) - the catalytic core - and CF(0) - the membrane proton channel. CF(1) has five subunits: alpha(3), beta(3), gamma(1), delta(1), epsilon(1). CF(0) has four main subunits: a, b, b' and c.

The protein resides in the cellular thylakoid membrane. Key component of the proton channel; it plays a direct role in the translocation of protons across the membrane. This chain is ATP synthase subunit a 1, found in Acaryochloris marina (strain MBIC 11017).